Consider the following 175-residue polypeptide: MSERIIMDEAAIQRTVTRIAHEILEYNKGTDNLILLGIKTRGAFLARRIQQKIEQIDEIAVPTGTIDITQFRDDLEQTINQVDERSYEIDVNITNQVVIIIDDVLYTGRTVRASLDAVLQYARPKKIGLATLVDRGHRELPIRADFVGKNIPTAKEEDVSVYLEEIDERNAVVIE.

Residues 40–41 (TR), Arg-85, 102–110 (DDVLYTGRT), Arg-135, and Val-159 contribute to the substrate site. Positions 98–110 (VIIIDDVLYTGRT) match the PRPP-binding motif.

The protein belongs to the purine/pyrimidine phosphoribosyltransferase family. PyrR subfamily. Homodimer and homohexamer; in equilibrium.

The catalysed reaction is UMP + diphosphate = 5-phospho-alpha-D-ribose 1-diphosphate + uracil. Functionally, regulates transcriptional attenuation of the pyrimidine nucleotide (pyr) operon by binding in a uridine-dependent manner to specific sites on pyr mRNA. This disrupts an antiterminator hairpin in the RNA and favors formation of a downstream transcription terminator, leading to a reduced expression of downstream genes. Also displays a weak uracil phosphoribosyltransferase activity which is not physiologically significant. This is Bifunctional protein PyrR from Staphylococcus saprophyticus subsp. saprophyticus (strain ATCC 15305 / DSM 20229 / NCIMB 8711 / NCTC 7292 / S-41).